Here is a 638-residue protein sequence, read N- to C-terminus: ABC transporter G family member 12 (638 aa).

The disordered stretch occupies residues 42-61 (KQEKAKKKNDTESSTGDMNT). The ABC transporter domain occupies 58–301 (DMNTGVSTTI…SLGYPCPNNT (244 aa)). 91-98 (GPSGSGKS) lines the ATP pocket. The ABC transmembrane type-2 domain occupies 374–633 (GNFVARVGTA…WTSYLALHFL (260 aa)). 7 helical membrane-spanning segments follow: residues 376–396 (FVARVGTAVVTGLLFGVCFAG), 410–430 (TIFFLITGLNLTPFAVISLFL), 459–479 (TLIVFLVALINAAICYLFAHL), 484–504 (GHFFFAIMVYFFVHLLSDFMI), 516–536 (MTFAYGSGLSVIYMLFAGFYV), 544–564 (SFGWLHWVNPLFYSFVSLVVN), and 612–632 (FGVVVAWTVFFFWTSYLALHF).

This sequence belongs to the ABC transporter superfamily. ABCG family. Eye pigment precursor importer (TC 3.A.1.204) subfamily.

It localises to the membrane. The protein is ABC transporter G family member 12 (abcG12) of Dictyostelium discoideum (Social amoeba).